The chain runs to 278 residues: 4-deoxy-L-threo-5-hexosulose-uronate ketol-isomerase (278 aa).

His-196, His-198, Glu-203, and His-245 together coordinate Zn(2+).

Belongs to the KduI family. Requires Zn(2+) as cofactor.

The catalysed reaction is 5-dehydro-4-deoxy-D-glucuronate = 3-deoxy-D-glycero-2,5-hexodiulosonate. It participates in glycan metabolism; pectin degradation; 2-dehydro-3-deoxy-D-gluconate from pectin: step 4/5. Functionally, catalyzes the isomerization of 5-dehydro-4-deoxy-D-glucuronate to 3-deoxy-D-glycero-2,5-hexodiulosonate. This chain is 4-deoxy-L-threo-5-hexosulose-uronate ketol-isomerase, found in Yersinia pseudotuberculosis serotype O:1b (strain IP 31758).